Here is a 405-residue protein sequence, read N- to C-terminus: L-rhamnonate dehydratase (405 aa).

Substrate contacts are provided by histidine 33 and arginine 59. Mg(2+)-binding residues include aspartate 226, glutamate 252, and glutamate 280. Catalysis depends on histidine 329, which acts as the Proton acceptor. A substrate-binding site is contributed by glutamate 349.

Belongs to the mandelate racemase/muconate lactonizing enzyme family. RhamD subfamily. Homooctamer; tetramer of dimers. The cofactor is Mg(2+).

It catalyses the reaction L-rhamnonate = 2-dehydro-3-deoxy-L-rhamnonate + H2O. Catalyzes the dehydration of L-rhamnonate to 2-keto-3-deoxy-L-rhamnonate (KDR). The polypeptide is L-rhamnonate dehydratase (Escherichia coli O81 (strain ED1a)).